Here is a 311-residue protein sequence, read N- to C-terminus: Ferritin-like catalase Nec2 (311 aa).

An N-terminal signal peptide occupies residues 1 to 25 (MAFLSNMAMFITMLMFSSMMHPCFS). N-linked (GlcNAc...) asparagine glycans are attached at residues Asn128, Asn257, and Asn289.

As to quaternary structure, forms homomultimers. As to expression, observed in all flowers organs; mainly expressed in nectaries and, to a lower extent, in petals and ovules, as well as in stigmas and calyx at low levels.

The catalysed reaction is 2 H2O2 = O2 + 2 H2O. Involved in the production of blood-red nectar containing the alkaloid nesocodin and that serves as a visual attractant for pollinator visitation, including vertebrates such as Phelsuma geckos. The nectar is initially acidic and pale yellow, but slowly becomes alkaline before turning into red within 24 hours. Together with NEC1 and NEC3, facilitates the condensation of sinapaldehyde ((E)-3,5-dimethoxy-4-hydroxycinnamaldehyde) and proline to form nesocodin, a pigment with a stable imine bond. Protects nesocodin from degradation by hydrogen peroxide H(2)O(2) by catalyzing the degradation of H(2)O(2) into water H(2)O and dioxygene O(2). This is Ferritin-like catalase Nec2 from Nesocodon mauritianus (Blue Mauritius bellflower).